A 146-amino-acid polypeptide reads, in one-letter code: Regulator of ribonuclease activity B (146 aa).

The interval 110 to 146 is disordered; that stretch reads WGTYFEDPDGEEEEGDEFDQDDEDGPADRDEVPATRH. The span at 115–134 shows a compositional bias: acidic residues; sequence EDPDGEEEEGDEFDQDDEDG. The span at 135–146 shows a compositional bias: basic and acidic residues; sequence PADRDEVPATRH.

This sequence belongs to the RraB family. As to quaternary structure, interacts with the C-terminal region of Rne.

Its subcellular location is the cytoplasm. In terms of biological role, globally modulates RNA abundance by binding to RNase E (Rne) and regulating its endonucleolytic activity. Can modulate Rne action in a substrate-dependent manner by altering the composition of the degradosome. The polypeptide is Regulator of ribonuclease activity B (Sodalis glossinidius (strain morsitans)).